Here is a 397-residue protein sequence, read N- to C-terminus: UPF0261 protein mlr3387 (397 aa).

This sequence belongs to the UPF0261 family.

The polypeptide is UPF0261 protein mlr3387 (Mesorhizobium japonicum (strain LMG 29417 / CECT 9101 / MAFF 303099) (Mesorhizobium loti (strain MAFF 303099))).